The chain runs to 421 residues: Granaticin polyketide putative beta-ketoacyl synthase 1 (421 aa).

The Ketosynthase family 3 (KS3) domain maps to 2–416; that stretch reads TRRVVITGVG…GFQSAMVLHR (415 aa). Active-site for beta-ketoacyl synthase activity residues include Cys169, His309, and His346.

It belongs to the thiolase-like superfamily. Beta-ketoacyl-ACP synthases family.

Its pathway is antibiotic biosynthesis; granaticin biosynthesis. The protein is Granaticin polyketide putative beta-ketoacyl synthase 1 (gra-orf1) of Streptomyces violaceoruber.